A 982-amino-acid chain; its full sequence is Cell division cycle-associated protein 2 (982 aa).

Positions 75 to 87 (VKTSSGKSTSSLQ) are enriched in polar residues. A disordered region spans residues 75–97 (VKTSSGKSTSSLQKARRRSTVGV). A phosphoserine mark is found at serine 100, serine 122, and serine 133. 2 disordered regions span residues 192 to 216 (SGFP…NYLS) and 274 to 315 (TPLS…CGSS). Polar residues-rich tracts occupy residues 207–216 (SQDSPDNYLS) and 275–315 (PLSS…CGSS). Phosphoserine occurs at positions 286, 296, and 306. Threonine 309 is subject to Phosphothreonine. The 58-residue stretch at 379-436 (KRKRVTFGEDLSPEVFDESLPANTPLCKGGTPVRPRTVKTTSPLQSPVHEQFLQPNFD) folds into the PP1-binding domain. 2 positions are modified to phosphoserine: serine 390 and serine 397. 4 disordered regions span residues 400 to 473 (ANTP…NTCS), 489 to 545 (TRTS…KSYR), 568 to 638 (KPLL…QSQV), and 651 to 716 (ASER…PQSQ). A Phosphothreonine modification is found at threonine 402. Residue serine 424 is modified to Phosphoserine. Polar residues-rich tracts occupy residues 451-473 (SFAN…NTCS) and 498-512 (TLSS…TTQA). Residues 518–545 (KMSRRKSREKKHTSAALPKKKQVLKSYR) are compositionally biased toward basic residues. Serine 572 and serine 595 each carry phosphoserine. Polar residues predominate over residues 651 to 668 (ASERGPNASTRDTGSEGN). The span at 669–685 (TRAESKCQSAKEPKPGT) shows a compositional bias: basic and acidic residues. Serine 735 is modified (phosphoserine). Residue lysine 741 forms a Glycyl lysine isopeptide (Lys-Gly) (interchain with G-Cter in SUMO2) linkage. The segment at 910–982 (ECPSSKEETI…SLKGESAQLP (73 aa)) is disordered. Serine 913 is modified (phosphoserine). The span at 931–942 (VSGSESQGVGSS) shows a compositional bias: low complexity. Serine 950 bears the Phosphoserine mark. Over residues 952–964 (CGSTLTDANSATQ) the composition is skewed to polar residues. Phosphoserine is present on serine 973.

As to quaternary structure, interacts with PPP1CC. In terms of processing, phosphorylated by CDK1. May regulate its subcellular location.

Its subcellular location is the nucleus. Its function is as follows. Regulator of chromosome structure during mitosis required for condensin-depleted chromosomes to retain their compact architecture through anaphase. Acts by mediating the recruitment of phopsphatase PP1-gamma subunit (PPP1CC) to chromatin at anaphase and into the following interphase. At anaphase onset, its association with chromatin targets a pool of PPP1CC to dephosphorylate substrates. This Mus musculus (Mouse) protein is Cell division cycle-associated protein 2 (Cdca2).